The sequence spans 134 residues: UPF0412 protein YaaI (134 aa).

Residues 1-23 (MKSVFTISASLAISLMLCCTAQA) form the signal peptide.

The protein belongs to the UPF0412 family.

The polypeptide is UPF0412 protein YaaI (Escherichia coli (strain K12)).